Reading from the N-terminus, the 442-residue chain is Na(+)/H(+) antiporter NhaA (442 aa).

11 helical membrane-spanning segments follow: residues 32 to 52 (IGGG…NSPW), 73 to 93 (LTLA…VAGL), 111 to 131 (AVPV…YALV), 139 to 159 (AGWA…LAVI), 170 to 190 (FLLT…AVVY), 193 to 213 (HLSI…TLLV), 234 to 254 (VHAS…AVPV), 284 to 304 (VAVP…LSGL), 316 to 336 (VVLG…FLVA), 352 to 372 (VLGL…IGEL), and 383 to 403 (HVKI…AVVL). A compositionally biased stretch (basic and acidic residues) spans 423-435 (HDGIPDVYQDLHR). Residues 423 to 442 (HDGIPDVYQDLHRSSPRPWG) form a disordered region.

Belongs to the NhaA Na(+)/H(+) (TC 2.A.33) antiporter family.

The protein resides in the cell membrane. The enzyme catalyses Na(+)(in) + 2 H(+)(out) = Na(+)(out) + 2 H(+)(in). Functionally, na(+)/H(+) antiporter that extrudes sodium in exchange for external protons. This Frankia casuarinae (strain DSM 45818 / CECT 9043 / HFP020203 / CcI3) protein is Na(+)/H(+) antiporter NhaA.